A 73-amino-acid chain; its full sequence is Translation initiation factor IF-1 1 (73 aa).

In terms of domain architecture, S1-like spans 1 to 72 (MAKEELIEFG…TKGRINFRHK (72 aa)).

The protein belongs to the IF-1 family. In terms of assembly, component of the 30S ribosomal translation pre-initiation complex which assembles on the 30S ribosome in the order IF-2 and IF-3, IF-1 and N-formylmethionyl-tRNA(fMet); mRNA recruitment can occur at any time during PIC assembly.

Its subcellular location is the cytoplasm. In terms of biological role, one of the essential components for the initiation of protein synthesis. Stabilizes the binding of IF-2 and IF-3 on the 30S subunit to which N-formylmethionyl-tRNA(fMet) subsequently binds. Helps modulate mRNA selection, yielding the 30S pre-initiation complex (PIC). Upon addition of the 50S ribosomal subunit IF-1, IF-2 and IF-3 are released leaving the mature 70S translation initiation complex. This chain is Translation initiation factor IF-1 1, found in Cupriavidus metallidurans (strain ATCC 43123 / DSM 2839 / NBRC 102507 / CH34) (Ralstonia metallidurans).